The sequence spans 154 residues: Movement protein (154 aa).

2 disordered regions span residues 83 to 103 (SSPT…HTRP) and 123 to 154 (WVAT…GRVR).

This sequence belongs to the luteoviruses movement protein family.

Transports viral genome to neighboring plant cells directly through plasmosdesmata, without any budding. The movement protein allows efficient cell to cell propagation, by bypassing the host cell wall barrier. This Barley yellow dwarf virus (isolate MAV) (BYDV) protein is Movement protein.